The primary structure comprises 337 residues: uncharacterized protein (337 aa).

The F-box domain occupies 22 to 76; it reads PFRLLSLPTLALKNVLLHIDFIDLLELSLASKKCEIYMKTCCLKIDSLHFHFRRI.

This is an uncharacterized protein from Caenorhabditis elegans.